We begin with the raw amino-acid sequence, 234 residues long: 3,4-dihydroxy-2-butanone 4-phosphate synthase (234 aa).

D-ribulose 5-phosphate contacts are provided by residues 39-40 (RE), Asp44, 152-156 (RRGHT), and Glu176. Glu40 is a binding site for Mg(2+). His155 is a binding site for Mg(2+).

The protein belongs to the DHBP synthase family. Homodimer. Requires Mg(2+) as cofactor. It depends on Mn(2+) as a cofactor.

It carries out the reaction D-ribulose 5-phosphate = (2S)-2-hydroxy-3-oxobutyl phosphate + formate + H(+). It functions in the pathway cofactor biosynthesis; riboflavin biosynthesis; 2-hydroxy-3-oxobutyl phosphate from D-ribulose 5-phosphate: step 1/1. Functionally, catalyzes the conversion of D-ribulose 5-phosphate to formate and 3,4-dihydroxy-2-butanone 4-phosphate. The protein is 3,4-dihydroxy-2-butanone 4-phosphate synthase of Pelobacter propionicus (strain DSM 2379 / NBRC 103807 / OttBd1).